Reading from the N-terminus, the 1402-residue chain is Eukaryotic translation initiation factor 4 gamma 1 (1402 aa).

Disordered regions lie at residues 1-123 and 165-402; these read MSGA…SPEP and HEPN…YEYK. Phosphothreonine is present on residues T11 and T27. Over residues 53–64 the composition is skewed to low complexity; sequence GPEHSPSESQPS. A compositionally biased stretch (pro residues) spans 65 to 76; that stretch reads SPSPTPSPPPIL. Position 120 is a phosphoserine (S120). Positions 238-251 are enriched in low complexity; sequence ASATPPAVPSATPA. Positions 261–275 are enriched in acidic residues; that stretch reads QEEEGEEEEEEEEGE. 2 stretches are compositionally biased toward basic and acidic residues: residues 280-290 and 324-340; these read ESDKGGEDLHP and KELN…DAFK. A compositionally biased stretch (low complexity) spans 359–370; that stretch reads PTPESEGSSGPS. Positions 379–388 are enriched in basic and acidic residues; it reads WDAKEDKIHN. T452 carries the post-translational modification Phosphothreonine. Disordered stretches follow at residues 476 to 517, 536 to 563, 600 to 636, and 828 to 1028; these read ANLG…PPKG, AEKA…GSKT, SKGS…ATTE, and MAKG…KREA. A compositionally biased stretch (low complexity) spans 479–488; the sequence is GRPALSSRGP. R490 and R499 each carry omega-N-methylarginine. Positions 547 to 563 are enriched in basic and acidic residues; that stretch reads TAADKDRGEEDADGSKT. The MIF4G domain occupies 567 to 793; sequence FRRVRSILNK…QDVLDLRQSN (227 aa). Residues 602–621 show a composition bias toward polar residues; the sequence is GSLTSSLRRPFQNPTSQWPS. S832 carries the phosphoserine modification. An omega-N-methylarginine mark is found at R836 and R846. Phosphoserine occurs at positions 881 and 896. Residues 892–913 are compositionally biased toward low complexity; that stretch reads GGRLSWGKGSSGSGAKPSDAAS. The residue at position 899 (K899) is an N6-acetyllysine. A compositionally biased stretch (polar residues) spans 918-937; that stretch reads PATSTLNRFSALQQAVPTES. Phosphoserine is present on residues S948 and S950. Residues 949–981 are compositionally biased toward basic and acidic residues; the sequence is LSRERGGKAGEPRRRLERSERGGDRGDRLDRAR. S988 carries the phosphoserine; by PKC/PRKCA modification. The segment covering 989-1028 has biased composition (basic and acidic residues); the sequence is FSKEVEERSRERPSQPEGLRKAASLTEDRDRGRDAAKREA. A phosphoserine mark is found at S990, S997, and S1012. Residue T1014 is modified to Phosphothreonine. A phosphoserine mark is found at S1034 and S1041. One can recognise an MI domain in the interval 1044 to 1166; it reads ELEKKSKAII…PMGELFREIT (123 aa). Residues 1231–1401 form the W2 domain; it reads EESEAPGQRA…REVEEEESDH (171 aa). Position 1399 is a phosphoserine (S1399).

Belongs to the eukaryotic initiation factor 4G family. As to quaternary structure, eIF4F is a multi-subunit complex, the composition of which varies with external and internal environmental conditions. It is composed of at least EIF4A, EIF4E (cap-binding) and EIF4G1/EIF4G3. Interacts with eIF3 complex, mutually exclusive with EIF4A1 or EIF4A2, EIF4E and through its N-terminus with PABPC1. Interacts with EIF4E or with EIF1 (mutually exclusive) through a common binding site. Interacts through its C-terminus with the serine/threonine kinases MKNK1, and with MKNK2. Appears to act as a scaffold protein, holding these enzymes in place to phosphorylate EIF4E. Non-phosphorylated EIF4EBP1 competes with EIF4G1/EIF4G3 to interact with EIF4E; insulin stimulated MAP-kinase (MAPK1 and MAPK3) phosphorylation of EIF4EBP1 causes dissociation of the complex allowing EIF4G1/EIF4G3 to bind and consequent initiation of translation. EIF4G1/EIF4G3 interacts with PABPC1 to bring about circularization of the mRNA. Interacts with EIF4E3. Interacts with CIRBP and MIF4GD. Interacts with RBM4. Interacts with HNRNPD/AUF1; the interaction requires RNA. Interacts with DDX3X; the interaction requires RNA. Interacts with DAZAP2. Post-translationally, phosphorylated at multiple sites in vivo. Phosphorylation at Ser-988 by PRKCA induces binding to MKNK1.

It localises to the cytoplasm. The protein resides in the nucleus. Its subcellular location is the stress granule. Its function is as follows. Component of the protein complex eIF4F, which is involved in the recognition of the mRNA cap, ATP-dependent unwinding of 5'-terminal secondary structure and recruitment of mRNA to the ribosome. Exists in two complexes, either with EIF1 or with EIF4E (mutually exclusive). Together with EIF1, is required for leaky scanning, in particular for avoiding cap-proximal start codon. Together with EIF4E, antagonizes the scanning promoted by EIF1-EIF4G1 and locates the start codon (through a TISU element) without scanning. As a member of the eIF4F complex, required for endoplasmic reticulum stress-induced ATF4 mRNA translation. This Oryctolagus cuniculus (Rabbit) protein is Eukaryotic translation initiation factor 4 gamma 1 (EIF4G1).